Here is a 67-residue protein sequence, read N- to C-terminus: DNA-directed RNA polymerase subunit omega (67 aa).

This sequence belongs to the RNA polymerase subunit omega family. The RNAP catalytic core consists of 2 alpha, 1 beta, 1 beta' and 1 omega subunit. When a sigma factor is associated with the core the holoenzyme is formed, which can initiate transcription.

The enzyme catalyses RNA(n) + a ribonucleoside 5'-triphosphate = RNA(n+1) + diphosphate. Its function is as follows. Promotes RNA polymerase assembly. Latches the N- and C-terminal regions of the beta' subunit thereby facilitating its interaction with the beta and alpha subunits. In Bordetella avium (strain 197N), this protein is DNA-directed RNA polymerase subunit omega.